The chain runs to 356 residues: MSIILSLETSCDESAAALVSNEKGKIDLLANEIASQIDEHANWGGVVPEIASRRHLENLPFLIEEVFAKSKLQIKDIDAVAATVTPGLAGSLLVGSITARTLANLHQIPFLGIHHLEGHLSSIYLSEKHPKPPFLVLLVSGGHTELIKVDVKHKYQRLGRSHDDAAGEAFDKVARLLGLSYPGGPAIQKIAKSGDPKKFLFPKGRVSKPEGGFYPYDFSFSGLKTAVFRQIEKIRSENKKLPIEDIAASFEYIVAEVLVERSFKCALDQGLNSLVLVGGVAANVRLREMMLAKASENSIDITLAPMEFCTDNAAMIGAAALLRLSSESFKSSMELGVSARWPLEKSDLLYDPIPPF.

Fe cation-binding residues include His115 and His119. Substrate is bound by residues 138–142 (LVSGG), Asp171, Gly184, and Asn283. Asp311 is a Fe cation binding site.

Belongs to the KAE1 / TsaD family. Requires Fe(2+) as cofactor.

It localises to the cytoplasm. It catalyses the reaction L-threonylcarbamoyladenylate + adenosine(37) in tRNA = N(6)-L-threonylcarbamoyladenosine(37) in tRNA + AMP + H(+). In terms of biological role, required for the formation of a threonylcarbamoyl group on adenosine at position 37 (t(6)A37) in tRNAs that read codons beginning with adenine. Is involved in the transfer of the threonylcarbamoyl moiety of threonylcarbamoyl-AMP (TC-AMP) to the N6 group of A37, together with TsaE and TsaB. TsaD likely plays a direct catalytic role in this reaction. This is tRNA N6-adenosine threonylcarbamoyltransferase from Prochlorococcus marinus (strain NATL2A).